Consider the following 61-residue polypeptide: uncharacterized protein (61 aa).

This is an uncharacterized protein from Fowlpox virus (strain NVSL) (FPV).